Reading from the N-terminus, the 325-residue chain is ATP phosphoribosyltransferase (325 aa).

Belongs to the ATP phosphoribosyltransferase family. Long subfamily. It depends on Mg(2+) as a cofactor.

It localises to the cytoplasm. It catalyses the reaction 1-(5-phospho-beta-D-ribosyl)-ATP + diphosphate = 5-phospho-alpha-D-ribose 1-diphosphate + ATP. It functions in the pathway amino-acid biosynthesis; L-histidine biosynthesis; L-histidine from 5-phospho-alpha-D-ribose 1-diphosphate: step 1/9. Its activity is regulated as follows. Feedback inhibited by histidine. In terms of biological role, catalyzes the condensation of ATP and 5-phosphoribose 1-diphosphate to form N'-(5'-phosphoribosyl)-ATP (PR-ATP). Has a crucial role in the pathway because the rate of histidine biosynthesis seems to be controlled primarily by regulation of HisG enzymatic activity. This chain is ATP phosphoribosyltransferase, found in Bradyrhizobium diazoefficiens (strain JCM 10833 / BCRC 13528 / IAM 13628 / NBRC 14792 / USDA 110).